The primary structure comprises 552 residues: Non-structural protein NS1 (552 aa).

This sequence belongs to the orbivirus non-structural protein NS1 family.

The polypeptide is Non-structural protein NS1 (Segment-5) (Bluetongue virus 10 (isolate USA) (BTV 10)).